Consider the following 231-residue polypeptide: CLAVATA3/ESR (CLE)-related protein 4B-1 (231 aa).

The first 21 residues, 1 to 21, serve as a signal peptide directing secretion; that stretch reads MATNTMLCLLILSVVLALAFA. The segment at 21–83 is required for secretion from the host cytoplasm to the host apoplasm; the sequence is ATNKKGDEEP…SNLLPNNNWM (63 aa). N-linked (GlcNAc...) asparagine glycosylation is present at asparagine 32. The disordered stretch occupies residues 116–231; it reads RKTGMHSQRH…APAGPDPIHH (116 aa). Composition is skewed to basic and acidic residues over residues 125 to 137 and 144 to 221; these read HHEE…EKRV and PIHH…EKRG. An A-1 repeat occupies 127-135; that stretch reads EETTLEQEK. Positions 127-219 are 5 X approximate repeat A; sequence EETTLEQEKR…HEETTFEQEK (93 aa). Residues 136 to 147 form a CLE-1 repeat; the sequence is RVAGAGPDPIHH. The 5 X approximate repeat CLE stretch occupies residues 136–231; that stretch reads RVAGAGPDPI…APAGPDPIHH (96 aa). Residues 148-156 form an A-2 repeat; the sequence is QDTTLEQEK. The CLE-2 repeat unit spans residues 157–168; that stretch reads RAVPAGPDPKHH. An A-3 repeat occupies 169–177; that stretch reads EETTLEQEK. The stretch at 178 to 189 is one CLE-3 repeat; sequence RAVPAGPDPKHH. Residues 190–198 form an A-4 repeat; the sequence is EETTLEQEK. The stretch at 199-210 is one CLE-4 repeat; it reads RAVPAGPDPKHH. The A-5 repeat unit spans residues 211-219; that stretch reads EETTFEQEK. The stretch at 220–231 is one CLE-5 repeat; that stretch reads RGAPAGPDPIHH.

This sequence belongs to the CLV3/ESR signal peptide family. Highly expressed exclusively within the dorsal esophageal gland cell during syncytium formation in host plants.

The protein resides in the secreted. The protein localises to the host cytoplasm. Its subcellular location is the host extracellular space. It localises to the extracellular space. It is found in the apoplast. Mimics host plant CLE extracellular signal peptides that regulate cell fate. May play a role in the differentiation or division of feeding cells (syncytia) induced in plant roots during infection. The protein is CLAVATA3/ESR (CLE)-related protein 4B-1 (CLE-4B-1) of Globodera rostochiensis (Golden nematode worm).